The chain runs to 551 residues: Prunin 1 Pru du 6 (551 aa).

Residues 1-20 form the signal peptide; it reads MAKAFVFSLCLLLVFNGCLA. 2 disulfides stabilise this stretch: C32–C65 and C108–C374. Positions 37–312 constitute a Cupin type-1 1 domain; sequence LQAREPDNRI…ALNVNEETAR (276 aa). Disordered regions lie at residues 111 to 194, 238 to 293, and 329 to 360; these read TFEE…QKTR, NPRK…NVFS, and GNLD…RQQQ. 3 stretches are compositionally biased toward low complexity: residues 114 to 124, 132 to 148, and 168 to 185; these read ESQQSSQQGRQ, QQQQ…QQEQ, and QEQQ…QQFR. Residue R194 participates in Ca(2+) binding. Residues 254 to 275 are compositionally biased toward low complexity; sequence QQGQSQPRQQGEQGRPGQHQQP. Residues 282-293 are compositionally biased toward polar residues; the sequence is QEQQGNGNNVFS. Residues 339 to 350 show a composition bias toward basic and acidic residues; sequence GRQEREHEERQQ. Over residues 351–360 the composition is skewed to low complexity; it reads EQLQQERQQQ. Residues 367 to 372 carry the NGXEET; peptidase recognition motif motif; it reads NGLEET. Positions 380-529 constitute a Cupin type-1 2 domain; the sequence is ENIGNPERAD…AYQISREQAR (150 aa).

It belongs to the 11S seed storage protein (globulins) family. Hexamer of two trimers; each subunit is composed of an acidic and a basic chain derived from a single precursor and linked by a disulfide bond. In terms of processing, proteolytically processed from a single precursor to produce an acidic and a basic chain that are linked by a disulfide bond. As to expression, expressed in seed (at protein level). Expressed in seed.

Its function is as follows. Seed storage protein. The polypeptide is Prunin 1 Pru du 6 (Prunus dulcis (Almond)).